We begin with the raw amino-acid sequence, 155 residues long: SsrA-binding protein (155 aa).

The interval 136-155 (RESLKRRQDQRDMQRAMKNY) is disordered.

This sequence belongs to the SmpB family.

The protein resides in the cytoplasm. Its function is as follows. Required for rescue of stalled ribosomes mediated by trans-translation. Binds to transfer-messenger RNA (tmRNA), required for stable association of tmRNA with ribosomes. tmRNA and SmpB together mimic tRNA shape, replacing the anticodon stem-loop with SmpB. tmRNA is encoded by the ssrA gene; the 2 termini fold to resemble tRNA(Ala) and it encodes a 'tag peptide', a short internal open reading frame. During trans-translation Ala-aminoacylated tmRNA acts like a tRNA, entering the A-site of stalled ribosomes, displacing the stalled mRNA. The ribosome then switches to translate the ORF on the tmRNA; the nascent peptide is terminated with the 'tag peptide' encoded by the tmRNA and targeted for degradation. The ribosome is freed to recommence translation, which seems to be the essential function of trans-translation. This Nostoc sp. (strain PCC 7120 / SAG 25.82 / UTEX 2576) protein is SsrA-binding protein.